Consider the following 246-residue polypeptide: Octanoyltransferase (246 aa).

Residues 54-240 (DPPPEAVWLL…CLEPNADAAI (187 aa)) form the BPL/LPL catalytic domain. Substrate is bound by residues 96 to 103 (RGGEVTHH), 163 to 165 (AIG), and 176 to 178 (GVA). Residue cysteine 194 is the Acyl-thioester intermediate of the active site.

The protein belongs to the LipB family.

It localises to the cytoplasm. The enzyme catalyses octanoyl-[ACP] + L-lysyl-[protein] = N(6)-octanoyl-L-lysyl-[protein] + holo-[ACP] + H(+). The protein operates within protein modification; protein lipoylation via endogenous pathway; protein N(6)-(lipoyl)lysine from octanoyl-[acyl-carrier-protein]: step 1/2. Catalyzes the transfer of endogenously produced octanoic acid from octanoyl-acyl-carrier-protein onto the lipoyl domains of lipoate-dependent enzymes. Lipoyl-ACP can also act as a substrate although octanoyl-ACP is likely to be the physiological substrate. The chain is Octanoyltransferase from Synechococcus sp. (strain WH7803).